A 782-amino-acid chain; its full sequence is Endonuclease MutS2 (782 aa).

Residue 336–343 (GPNTGGKT) coordinates ATP. A Smr domain is found at 707–782 (LDLRGYRYEE…GFGVTVAELK (76 aa)).

This sequence belongs to the DNA mismatch repair MutS family. MutS2 subfamily. In terms of assembly, homodimer. Binds to stalled ribosomes, contacting rRNA.

Functionally, endonuclease that is involved in the suppression of homologous recombination and thus may have a key role in the control of bacterial genetic diversity. Its function is as follows. Acts as a ribosome collision sensor, splitting the ribosome into its 2 subunits. Detects stalled/collided 70S ribosomes which it binds and splits by an ATP-hydrolysis driven conformational change. Acts upstream of the ribosome quality control system (RQC), a ribosome-associated complex that mediates the extraction of incompletely synthesized nascent chains from stalled ribosomes and their subsequent degradation. Probably generates substrates for RQC. This chain is Endonuclease MutS2, found in Staphylococcus carnosus (strain TM300).